We begin with the raw amino-acid sequence, 255 residues long: Aquaporin TIP4-1 (255 aa).

2 helical membrane passes run 25 to 45 (AVLA…SAAM) and 61 to 81 (TLAA…TAGF). The NPA 1 signature appears at 89 to 91 (NPA). 3 consecutive transmembrane segments (helical) span residues 108–128 (VLYV…LRFL), 148–168 (GLVM…AMIL), and 176–196 (AIGP…GGNF). Residues 202–204 (NPA) carry the NPA 2 motif. Residues 223–243 (WIGPLLGGPLAGFVYESLFLV) traverse the membrane as a helical segment.

Belongs to the MIP/aquaporin (TC 1.A.8) family. TIP (TC 1.A.8.10) subfamily.

Its subcellular location is the vacuole membrane. Functionally, aquaporins facilitate the transport of water and small neutral solutes across cell membranes. This is Aquaporin TIP4-1 (TIP4-1) from Zea mays (Maize).